The primary structure comprises 435 residues: ATP-dependent protease ATPase subunit HslU (435 aa).

Residues Ile-18, 60-65 (GVGKTE), Asp-248, Glu-313, and Arg-385 contribute to the ATP site.

Belongs to the ClpX chaperone family. HslU subfamily. As to quaternary structure, a double ring-shaped homohexamer of HslV is capped on each side by a ring-shaped HslU homohexamer. The assembly of the HslU/HslV complex is dependent on binding of ATP.

The protein localises to the cytoplasm. In terms of biological role, ATPase subunit of a proteasome-like degradation complex; this subunit has chaperone activity. The binding of ATP and its subsequent hydrolysis by HslU are essential for unfolding of protein substrates subsequently hydrolyzed by HslV. HslU recognizes the N-terminal part of its protein substrates and unfolds these before they are guided to HslV for hydrolysis. This chain is ATP-dependent protease ATPase subunit HslU, found in Rhizobium etli (strain CIAT 652).